The sequence spans 94 residues: MNKEQFDVNLVPTWRQGYRFQFEPAQNGFVILYPEGMIKLNESAGAIGQYIDGKNNVSAIIAQLKQQFGDVAEIDNDVIDYMLVAQQQHWIDLV.

It belongs to the PqqD family. As to quaternary structure, monomer. Interacts with PqqE.

The protein operates within cofactor biosynthesis; pyrroloquinoline quinone biosynthesis. Its function is as follows. Functions as a PqqA binding protein and presents PqqA to PqqE, in the pyrroloquinoline quinone (PQQ) biosynthetic pathway. The sequence is that of PqqA binding protein from Acinetobacter baumannii (strain SDF).